The primary structure comprises 319 residues: Glucokinase (319 aa).

8 to 13 contacts ATP; it reads GDIGGT.

Belongs to the bacterial glucokinase family.

The protein resides in the cytoplasm. It catalyses the reaction D-glucose + ATP = D-glucose 6-phosphate + ADP + H(+). In Chromohalobacter salexigens (strain ATCC BAA-138 / DSM 3043 / CIP 106854 / NCIMB 13768 / 1H11), this protein is Glucokinase.